The following is a 360-amino-acid chain: 3-dehydroquinate synthase (360 aa).

Residues 71 to 76 (DGEQYK), 105 to 109 (GVVGD), 129 to 130 (TT), Lys142, Lys151, and 169 to 172 (TLNT) contribute to the NAD(+) site. The Zn(2+) site is built by Glu184, His248, and His265.

The protein belongs to the sugar phosphate cyclases superfamily. Dehydroquinate synthase family. Requires Co(2+) as cofactor. The cofactor is Zn(2+). NAD(+) serves as cofactor.

It localises to the cytoplasm. It carries out the reaction 7-phospho-2-dehydro-3-deoxy-D-arabino-heptonate = 3-dehydroquinate + phosphate. Its pathway is metabolic intermediate biosynthesis; chorismate biosynthesis; chorismate from D-erythrose 4-phosphate and phosphoenolpyruvate: step 2/7. Functionally, catalyzes the conversion of 3-deoxy-D-arabino-heptulosonate 7-phosphate (DAHP) to dehydroquinate (DHQ). The chain is 3-dehydroquinate synthase from Coxiella burnetii (strain CbuK_Q154) (Coxiella burnetii (strain Q154)).